The primary structure comprises 98 residues: DNA-binding protein Fis (98 aa).

The H-T-H motif DNA-binding region spans 74–93 (QTRAALMMGINRGTLRKKLK).

Belongs to the transcriptional regulatory Fis family. As to quaternary structure, homodimer.

Its function is as follows. Activates ribosomal RNA transcription. Plays a direct role in upstream activation of rRNA promoters. This is DNA-binding protein Fis from Pectobacterium atrosepticum (strain SCRI 1043 / ATCC BAA-672) (Erwinia carotovora subsp. atroseptica).